A 453-amino-acid chain; its full sequence is Ribosomal protein uS12 methylthiotransferase RimO (453 aa).

One can recognise an MTTase N-terminal domain in the interval 9–124 (PKVGFVSLGC…VMEAVHTHLP (116 aa)). The [4Fe-4S] cluster site is built by cysteine 18, cysteine 54, cysteine 83, cysteine 155, cysteine 159, and cysteine 162. A Radical SAM core domain is found at 141–382 (LTPKHYAYLK…MEVAERVSAR (242 aa)). The 69-residue stretch at 385-453 (QRKVGKTLRV…ADGHDLWGEV (69 aa)) folds into the TRAM domain.

The protein belongs to the methylthiotransferase family. RimO subfamily. The cofactor is [4Fe-4S] cluster.

Its subcellular location is the cytoplasm. It carries out the reaction L-aspartate(89)-[ribosomal protein uS12]-hydrogen + (sulfur carrier)-SH + AH2 + 2 S-adenosyl-L-methionine = 3-methylsulfanyl-L-aspartate(89)-[ribosomal protein uS12]-hydrogen + (sulfur carrier)-H + 5'-deoxyadenosine + L-methionine + A + S-adenosyl-L-homocysteine + 2 H(+). Its function is as follows. Catalyzes the methylthiolation of an aspartic acid residue of ribosomal protein uS12. In Ralstonia nicotianae (strain ATCC BAA-1114 / GMI1000) (Ralstonia solanacearum), this protein is Ribosomal protein uS12 methylthiotransferase RimO.